A 131-amino-acid polypeptide reads, in one-letter code: Arsenate reductase (131 aa).

Active-site nucleophile residues include cysteine 10, cysteine 82, and cysteine 89. 2 disulfide bridges follow: cysteine 10–cysteine 82 and cysteine 82–cysteine 89.

Belongs to the low molecular weight phosphotyrosine protein phosphatase family. Thioredoxin-coupled ArsC subfamily.

It localises to the cytoplasm. It carries out the reaction arsenate + [thioredoxin]-dithiol + H(+) = arsenite + [thioredoxin]-disulfide + H2O. Its function is as follows. Catalyzes the reduction of arsenate [As(V)] to arsenite [As(III)]. This is Arsenate reductase from Staphylococcus aureus (strain COL).